The chain runs to 296 residues: Mitochondrial arginine transporter BAC2 (296 aa).

Solcar repeat units follow at residues 13 to 93 (GREF…FSRS), 104 to 187 (PSYR…VRER), and 198 to 282 (ENLR…ALRC). The next 6 membrane-spanning stretches (helical) occupy residues 16–36 (FVAGGFGGVAGIISGYPLDTL), 70–90 (AAPLASVTFQNAMVFQIYAIF), 110–130 (ALGGVATGAVQSLLLTPVELI), 162–181 (GLTITVLRDAPAHGLYFWTY), 204–224 (LVAGGLAGVASWVACYPLDVV), and 260–280 (TAVARAFVVNGAIFAAYEVAL).

The protein belongs to the mitochondrial carrier (TC 2.A.29) family. In terms of tissue distribution, high expression in flowers, stamens, petals and pollen. Expressed in roots, leaves and stems.

The protein resides in the mitochondrion inner membrane. Its activity is regulated as follows. Inhibited by mercuric chloride. Its function is as follows. Mitochondrial arginine transporter that catalyzes the counter-exchange of arginine with lysine, ornithine, arginine, histidine and citrulline. Substrate preference in reconstituted proteoliposomes is arginine &gt; homoarginine &gt; citrulline &gt; histidine &gt; lysine &gt; ornithine. May be involved in the delivery of arginine, released from seed reserves, to mitochondrial arginase and the export of ornithine. May contribute to proline accumulation in response to hyperosmotic stress. This is Mitochondrial arginine transporter BAC2 (BAC2) from Arabidopsis thaliana (Mouse-ear cress).